The following is a 725-amino-acid chain: Antigen peptide transporter 1 (725 aa).

Topologically, residues M1–T8 are cytoplasmic. The chain crosses the membrane as a helical span at residues A9 to F29. The Lumenal segment spans residues S30–L38. A helical membrane pass occupies residues L39–L60. Over G61–R67 the chain is Cytoplasmic. Residues G68–A88 form a helical membrane-spanning segment. Residues S89–W110 lie on the Lumenal side of the membrane. The helical transmembrane segment at N111–W131 threads the bilayer. Residues H132–R163 are Cytoplasmic-facing. A helical membrane pass occupies residues L164 to F184. The region spanning L164–K447 is the ABC transmembrane type-1 domain. The Lumenal portion of the chain corresponds to T185–N204. Residues M205 to I225 traverse the membrane as a helical segment. Residues Y226–S275 lie on the Cytoplasmic side of the membrane. A helical membrane pass occupies residues I276–F296. Residues M297–T305 are Lumenal-facing. Residues V306–Y326 form a helical membrane-spanning segment. Over Q327–S395 the chain is Cytoplasmic. Residues P352–M397 are part of the peptide-binding site. The helical transmembrane segment at G396–V416 threads the bilayer. Topologically, residues S417–N420 are lumenal. The helical transmembrane segment at L421–I441 threads the bilayer. The segment at Q430–C464 is part of the peptide-binding site. Residues Y442–D725 lie on the Cytoplasmic side of the membrane. The region spanning V480–A719 is the ABC transporter domain. ATP-binding positions include G515–T523, N618–Q624, and Q678. S522 contributes to the Mg(2+) binding site.

This sequence belongs to the ABC transporter superfamily. ABCB family. MHC peptide exporter (TC 3.A.1.209) subfamily. As to quaternary structure, heterodimer of TAP1 and TAP2 (TAP1-TAP2). A component of the peptide loading complex (PLC), interacts via TAPBP with MHCI heterodimer; this interaction mediates peptide-MHCI assembly. Interacts with PSMB5 and PSMB8. It depends on Mg(2+) as a cofactor.

Its subcellular location is the endoplasmic reticulum membrane. The catalysed reaction is a peptide antigen(in) + ATP + H2O = a peptide antigen(out) + ADP + phosphate + H(+). Its function is as follows. ABC transporter associated with antigen processing. In complex with TAP2 mediates unidirectional translocation of peptide antigens from cytosol to endoplasmic reticulum (ER) for loading onto MHC class I (MHCI) molecules. Uses the chemical energy of ATP to export peptides against the concentration gradient. During the transport cycle alternates between 'inward-facing' state with peptide binding site facing the cytosol to 'outward-facing' state with peptide binding site facing the ER lumen. Peptide antigen binding to ATP-loaded TAP1-TAP2 induces a switch to hydrolysis-competent 'outward-facing' conformation ready for peptide loading onto nascent MHCI molecules. Subsequently ATP hydrolysis resets the transporter to the 'inward facing' state for a new cycle. As a component of the peptide loading complex (PLC), acts as a molecular scaffold essential for peptide-MHCI assembly and antigen presentation. The polypeptide is Antigen peptide transporter 1 (Tap1) (Rattus norvegicus (Rat)).